Here is a 208-residue protein sequence, read N- to C-terminus: FMN-dependent NADH:quinone oxidoreductase 2 (208 aa).

It belongs to the azoreductase type 1 family. As to quaternary structure, homodimer. FMN is required as a cofactor.

It carries out the reaction 2 a quinone + NADH + H(+) = 2 a 1,4-benzosemiquinone + NAD(+). The catalysed reaction is N,N-dimethyl-1,4-phenylenediamine + anthranilate + 2 NAD(+) = 2-(4-dimethylaminophenyl)diazenylbenzoate + 2 NADH + 2 H(+). Functionally, quinone reductase that provides resistance to thiol-specific stress caused by electrophilic quinones. In terms of biological role, also exhibits azoreductase activity. Catalyzes the reductive cleavage of the azo bond in aromatic azo compounds to the corresponding amines. The chain is FMN-dependent NADH:quinone oxidoreductase 2 from Bacillus anthracis.